We begin with the raw amino-acid sequence, 143 residues long: MRLLVNNKKAKYNYELLDKYEAGISLSGNEVKSLALHHGKLDDSYVIIRKNEAYLLNLLIPKYKFDTSKVLNETRTRKLLLHKSEILKIDLIKKQHSLVIIPYQIYFVNNKIKVSIYLARPKKRYDKRQTIKEREINKKIRKY.

Belongs to the SmpB family.

The protein resides in the cytoplasm. Required for rescue of stalled ribosomes mediated by trans-translation. Binds to transfer-messenger RNA (tmRNA), required for stable association of tmRNA with ribosomes. tmRNA and SmpB together mimic tRNA shape, replacing the anticodon stem-loop with SmpB. tmRNA is encoded by the ssrA gene; the 2 termini fold to resemble tRNA(Ala) and it encodes a 'tag peptide', a short internal open reading frame. During trans-translation Ala-aminoacylated tmRNA acts like a tRNA, entering the A-site of stalled ribosomes, displacing the stalled mRNA. The ribosome then switches to translate the ORF on the tmRNA; the nascent peptide is terminated with the 'tag peptide' encoded by the tmRNA and targeted for degradation. The ribosome is freed to recommence translation, which seems to be the essential function of trans-translation. This is SsrA-binding protein from Mycoplasmoides gallisepticum (strain R(low / passage 15 / clone 2)) (Mycoplasma gallisepticum).